A 516-amino-acid chain; its full sequence is D-aminopeptidase (516 aa).

The active-site Nucleophile is serine 61. Catalysis depends on lysine 64, which acts as the Proton donor/acceptor. Positions 476-486 are important for specificity; that stretch reads RRSMDAPAPGD. Aspartate 480 provides a ligand contact to substrate.

Belongs to the peptidase S12 family. Homodimer.

It catalyses the reaction Release of an N-terminal D-amino acid from a peptide, Xaa-|-Yaa-, in which Xaa is preferably D-Ala, D-Ser or D-Thr. D-amino acid amides and methyl esters also are hydrolyzed, as is glycine amide.. With respect to regulation, inhibited by beta-lactam compounds such as 6-aminopenicillic acid, 7-aminocephalosporanic acid, benzylpenicillin and ampicillin. Inhibited by p-chloromercuribenzoate. Its function is as follows. Hydrolyzes N-terminal residues in D-amino acid-containing peptides. This Cereibacter sphaeroides (strain ATCC 17023 / DSM 158 / JCM 6121 / CCUG 31486 / LMG 2827 / NBRC 12203 / NCIMB 8253 / ATH 2.4.1.) (Rhodobacter sphaeroides) protein is D-aminopeptidase.